Reading from the N-terminus, the 396-residue chain is Putative glutamate--cysteine ligase 2-2 (396 aa).

This sequence belongs to the glutamate--cysteine ligase type 2 family. YbdK subfamily.

The catalysed reaction is L-cysteine + L-glutamate + ATP = gamma-L-glutamyl-L-cysteine + ADP + phosphate + H(+). In terms of biological role, ATP-dependent carboxylate-amine ligase which exhibits weak glutamate--cysteine ligase activity. The sequence is that of Putative glutamate--cysteine ligase 2-2 from Mycolicibacterium smegmatis (strain ATCC 700084 / mc(2)155) (Mycobacterium smegmatis).